A 172-amino-acid polypeptide reads, in one-letter code: Scytalone dehydratase (172 aa).

Residues Tyr-30, Tyr-50, and Phe-53 each contribute to the substrate site. Active-site residues include His-85 and His-110. Asn-131 is a substrate binding site.

Belongs to the scytalone dehydratase family. Homotrimer. Each subunit contains an active site, located in the central part of the hydrophobic core of the monomer, which functions independently.

The protein localises to the endosome. The enzyme catalyses scytalone = 1,3,8-trihydroxynaphthalene + H2O. Its pathway is pigment biosynthesis; melanin biosynthesis. With respect to regulation, (N-phenoxypropyl)-carboxamides such as carpropamid and derivatives of norephedrine act as inhibitors of scytalone dehydratase activity. Scytalone dehydratase; part of the gene cluster that mediates the biosynthesis of dihydroxynaphthalene melanin, a bluish-green pigment and a structural component of the conidial wall. Within the pathway, catalyzes the dehydration of scytalone as well as of vermelone. Is also able to dehydrate the alternate substrate 2,3-dihydro-2,5-dihydroxy-4H-benzopyran-4-one (DDBO) to 5-hydroxy-4H-1-benzopyran-4-one (HBO). The polypeptide is Scytalone dehydratase (SDH1) (Pyricularia oryzae (strain 70-15 / ATCC MYA-4617 / FGSC 8958) (Rice blast fungus)).